Here is a 47-residue protein sequence, read N- to C-terminus: Large ribosomal subunit protein bL34 (47 aa).

Positions 1–28 are disordered; sequence MAKGKRTFQPNNRRRARVHGFRTRMRTR.

It belongs to the bacterial ribosomal protein bL34 family.

This is Large ribosomal subunit protein bL34 from Corynebacterium efficiens (strain DSM 44549 / YS-314 / AJ 12310 / JCM 11189 / NBRC 100395).